Consider the following 846-residue polypeptide: Exonuclease 1 (846 aa).

Residues 1 to 99 (MGIQGLLQFI…RSRRERRQAN (99 aa)) form an N-domain region. Residues Asp30, Asp78, Glu150, Asp152, Asp171, Asp173, Asp225, and Asp270 each coordinate Mg(2+). An interaction with MSH3 region spans residues 129 to 387 (MAHKVIKAAR…RPESGTVSDA (259 aa)). The segment at 138–229 (RSQGVDCLVA…ILSGCDYLSS (92 aa)) is I-domain. The disordered stretch occupies residues 372-396 (HRNYSPRPESGTVSDAPQLKENPST). Position 376 is a phosphoserine (Ser376). A compositionally biased stretch (polar residues) spans 382-396 (GTVSDAPQLKENPST). Residues 388 to 490 (PQLKENPSTV…NKFATFLQRK (103 aa)) are interaction with MLH1. The short motif at 418-421 (KRPR) is the Nuclear localization signal element. 2 positions are modified to phosphoserine: Ser422 and Ser454. Lys482 is subject to N6-acetyllysine. A Phosphothreonine modification is found at Thr581. Residues Ser598 and Ser610 each carry the phosphoserine modification. Residues 600–846 (PTLGTLRSCF…CGRVQRAIFQ (247 aa)) form an interaction with MSH2 region. Residues 618 to 781 (FSRTPSPSPS…SIQKRKHHNA (164 aa)) are disordered. 2 stretches are compositionally biased toward polar residues: residues 620-631 (RTPSPSPSTALQ) and 639-654 (SPTS…VSQL). Residue Thr621 is modified to Phosphothreonine. Phosphoserine occurs at positions 623, 639, 660, and 674. Over residues 655–671 (KSEESSDDESHPLREEA) the composition is skewed to basic and acidic residues. Composition is skewed to polar residues over residues 672–689 (CSSQ…SSNA), 713–722 (DSQSDQTSKL), and 743–754 (KSSSADSLSTTK). The residue at position 714 (Ser714) is a Phosphoserine; by ATR. Ser746 carries the phosphoserine modification. The segment at 787-846 (LQIKLNELWKNFGFKKDSEKLPPCKKPLSPVRDNIQLTPEAEEDIFNKPECGRVQRAIFQ) is interaction with MLH1.

It belongs to the XPG/RAD2 endonuclease family. EXO1 subfamily. In terms of assembly, interacts with the MLH1-PMS2 heterodimer via MLH1. Interacts with MSH3. Interacts with the MSH2-MSH6 heterodimer via MSH2, and this interaction may increase the processivity of the 5'-&gt;3' exonuclease activity. Interacts with PCNA, and this interaction may both stimulate the cryptic 3'-&gt;5' exonuclease activity and suppress the 5'-&gt;3' exonuclease activity. Interacts with WRN, and this interaction stimulates both the 5'-&gt;3' exonuclease activity and cleavage of 5'-overhanging flap structures. Interacts with RECQL/RECQ1, and this interaction stimulates cleavage of 5'-overhanging flap structures. Interacts with DNA helicase ZGRF1; the interaction is increased following DNA damage induction. It depends on Mg(2+) as a cofactor. Phosphorylated upon DNA damage and in response to agents stalling DNA replication, probably by ATM or ATR. Phosphorylation at Ser-454, Thr-621 and Ser-714 is induced upon DNA-damage caused by treatment with hydroxyurea (HU) but not upon IR treatment. The HU-induced EXO1 triple phosphorylation facilitates destabilization/degradation of the protein. Highly expressed in bone marrow, testis and thymus. Expressed at lower levels in colon, lymph nodes, ovary, placenta, prostate, small intestine, spleen and stomach.

The protein localises to the nucleus. In terms of biological role, 5'-&gt;3' double-stranded DNA exonuclease which may also possess a cryptic 3'-&gt;5' double-stranded DNA exonuclease activity. Functions in DNA mismatch repair (MMR) to excise mismatch-containing DNA tracts directed by strand breaks located either 5' or 3' to the mismatch. Also exhibits endonuclease activity against 5'-overhanging flap structures similar to those generated by displacement synthesis when DNA polymerase encounters the 5'-end of a downstream Okazaki fragment. Required for somatic hypermutation (SHM) and class switch recombination (CSR) of immunoglobulin genes. Essential for male and female meiosis. This chain is Exonuclease 1 (EXO1), found in Homo sapiens (Human).